The primary structure comprises 219 residues: Dynein light chain Tctex-type 4 (219 aa).

The segment at 1-84 is disordered; it reads MAGRPVPAGR…RRPSLGPVPP (84 aa). A compositionally biased stretch (basic and acidic residues) spans 10 to 20; it reads RQEEELAKDPG. Serine 64 carries the post-translational modification Phosphoserine.

This sequence belongs to the dynein light chain Tctex-type family. In terms of assembly, interacts with ENG/endoglin, TGFBR2 and TGFBR3. Interacts with PPP1CC.

The protein resides in the cell projection. The protein localises to the cilium. It localises to the flagellum. Its subcellular location is the cytoplasmic vesicle. It is found in the secretory vesicle. The protein resides in the acrosome. The protein localises to the cytoplasm. It localises to the cytoskeleton. Its subcellular location is the cilium axoneme. It is found in the nucleus. The protein resides in the microtubule organizing center. The protein is Dynein light chain Tctex-type 4 (DYNLT4) of Sus scrofa (Pig).